The chain runs to 311 residues: Malate dehydrogenase (311 aa).

Residues 7–13 (GAAGGIG) and Asp34 contribute to the NAD(+) site. Substrate-binding residues include Arg81 and Arg87. NAD(+) contacts are provided by residues Asn94 and 117–119 (ITN). Positions 119 and 153 each coordinate substrate. His177 acts as the Proton acceptor in catalysis. An NAD(+)-binding site is contributed by Met227.

Belongs to the LDH/MDH superfamily. MDH type 1 family. In terms of assembly, homodimer.

It carries out the reaction (S)-malate + NAD(+) = oxaloacetate + NADH + H(+). Functionally, catalyzes the reversible oxidation of malate to oxaloacetate. This Vibrio parahaemolyticus serotype O3:K6 (strain RIMD 2210633) protein is Malate dehydrogenase.